Reading from the N-terminus, the 473-residue chain is H(+)/Cl(-) exchange transporter ClcA (473 aa).

The Cytoplasmic portion of the chain corresponds to 1–32 (MKTDTPSLETPQAARLRRRQLIRQLLERDKTP). The chain crosses the membrane as a helical span at residues 33–69 (LAILFMAAVVGTLVGLAAVAFDKGVAWLQNQRMGALV). Over 70–76 (HTADNYP) the chain is Periplasmic. Residues 77-100 (LLLTVAFLCSAVLAMFGYFLVRKY) traverse the membrane as a helical segment. Positions 106 to 110 (GSGIP) match the Selectivity filter part_1 motif. Residue S107 participates in chloride binding. Residues 109-116 (IPEIEGAL) constitute an intramembrane region (helical). At 117–123 (EDQRPVR) the chain is on the cytoplasmic side. The next 2 membrane-spanning stretches (helical) occupy residues 124–141 (WWRV…TLGG) and 148–166 (EGPT…LDIF). A Selectivity filter part_2 motif is present at residues 146 to 150 (GREGP). Residues 167 to 176 (RLKGDEARHT) are Cytoplasmic-facing. 2 consecutive intramembrane regions (helical) follow at residues 177–189 (LLAT…LAAA) and 193–201 (PLAGILFII). The Cytoplasmic portion of the chain corresponds to 202 to 214 (EEMRPQFRYTLIS). A helical transmembrane segment spans residues 215-232 (IKAVFIGVIMSTIMYRIF). Residues 233–252 (NHEVALIDVGKLSDAPLNTQ) are Periplasmic-facing. Residues 253–281 (WLYLILGIIFGIFGPIFNKWVLGMQDLLH) form a helical membrane-spanning segment. Topologically, residues 282-287 (RVHGGN) are cytoplasmic. A helical membrane pass occupies residues 288-309 (ITKWVLMGGAIGGLCGLLGFVA). Over 310 to 329 (PATSGGGFNLIPIATAGNFS) the chain is Periplasmic. Helical transmembrane passes span 330–349 (MGML…LCFS) and 355–376 (GIFA…MVVV). A Selectivity filter part_3 motif is present at residues 355–359 (GIFAP). Chloride is bound by residues I356 and F357. At 377–386 (ELFPQYHLEA) the chain is on the periplasmic side. Residues 387–401 (GTFAIAGMGALLAAS) constitute an intramembrane region (helical). Residues 402 to 404 (IRA) constitute an intramembrane region (note=Loop between two helices). Positions 405 to 416 (PLTGIILVLEMT) form an intramembrane region, helical. Residues 417-421 (DNYQL) constitute an intramembrane region (note=Loop between two helices). The helical transmembrane segment at 422–438 (ILPMIITGLGATLLAQF) threads the bilayer. Over 439–473 (TGGKPLYSAILARTLAKQEAEQLARSKAASASENT) the chain is Cytoplasmic. Y445 contacts chloride.

Belongs to the chloride channel (TC 2.A.49) family. ClcA subfamily. Homodimer.

It is found in the cell inner membrane. The enzyme catalyses 2 chloride(in) + H(+)(out) = 2 chloride(out) + H(+)(in). Functionally, proton-coupled chloride transporter. Functions as antiport system and exchanges two chloride ions for 1 proton. Probably acts as an electrical shunt for an outwardly-directed proton pump that is linked to amino acid decarboxylation, as part of the extreme acid resistance (XAR) response. The protein is H(+)/Cl(-) exchange transporter ClcA of Shigella boydii serotype 18 (strain CDC 3083-94 / BS512).